Consider the following 64-residue polypeptide: UPF0434 protein BOV_A0835 (64 aa).

It belongs to the UPF0434 family.

The protein is UPF0434 protein BOV_A0835 of Brucella ovis (strain ATCC 25840 / 63/290 / NCTC 10512).